Here is a 695-residue protein sequence, read N- to C-terminus: U1 snRNP-associated protein usp107 (695 aa).

Residues 85-96 (RDNESQQKDRKN) are compositionally biased toward basic and acidic residues. The segment at 85 to 134 (RDNESQQKDRKNLPRNQKSNEIQEKQTFQTPSSEKSTTERESRPFVPPNS) is disordered. Residues 98-113 (PRNQKSNEIQEKQTFQ) are compositionally biased toward polar residues. One can recognise an RRM domain in the interval 139–221 (RMLFIGNIPK…PSTRLSLITD (83 aa)). The stretch at 265–369 (DVRSRIERAA…NLLSKHRISR (105 aa)) forms a coiled coil. 2 stretches are compositionally biased toward basic and acidic residues: residues 487–506 (EEDA…RTRG) and 548–561 (SERR…RLLL). Disordered stretches follow at residues 487 to 509 (EEDA…GEGA) and 540 to 590 (QTKK…AEKT). The PWI domain maps to 605–695 (ESLWALPIDW…HVLLILRSEA (91 aa)).

In terms of assembly, component of the U1 snRNP particle, a subcomplex of the spliceosome. Interacts with prp5 and usp102.

It localises to the cytoplasm. Its subcellular location is the nucleus. Its function is as follows. Component of the U1 snRNP particle, which recognizes and binds the 5'-splice site of pre-mRNA. Together with other non-snRNP factors, U1 snRNP forms the spliceosomal commitment complex, that targets pre-mRNA to the splicing pathway. The sequence is that of U1 snRNP-associated protein usp107 (usp107) from Schizosaccharomyces pombe (strain 972 / ATCC 24843) (Fission yeast).